A 122-amino-acid polypeptide reads, in one-letter code: Large ribosomal subunit protein bL12 (122 aa).

The protein belongs to the bacterial ribosomal protein bL12 family. As to quaternary structure, homodimer. Part of the ribosomal stalk of the 50S ribosomal subunit. Forms a multimeric L10(L12)X complex, where L10 forms an elongated spine to which 2 to 4 L12 dimers bind in a sequential fashion. Binds GTP-bound translation factors.

In terms of biological role, forms part of the ribosomal stalk which helps the ribosome interact with GTP-bound translation factors. Is thus essential for accurate translation. In Mycoplasma capricolum subsp. capricolum (strain California kid / ATCC 27343 / NCTC 10154), this protein is Large ribosomal subunit protein bL12.